Consider the following 201-residue polypeptide: NADH-quinone oxidoreductase subunit C (201 aa).

Belongs to the complex I 30 kDa subunit family. NDH-1 is composed of 14 different subunits. Subunits NuoB, C, D, E, F, and G constitute the peripheral sector of the complex.

It localises to the cell inner membrane. The catalysed reaction is a quinone + NADH + 5 H(+)(in) = a quinol + NAD(+) + 4 H(+)(out). In terms of biological role, NDH-1 shuttles electrons from NADH, via FMN and iron-sulfur (Fe-S) centers, to quinones in the respiratory chain. The immediate electron acceptor for the enzyme in this species is believed to be ubiquinone. Couples the redox reaction to proton translocation (for every two electrons transferred, four hydrogen ions are translocated across the cytoplasmic membrane), and thus conserves the redox energy in a proton gradient. This chain is NADH-quinone oxidoreductase subunit C, found in Aromatoleum aromaticum (strain DSM 19018 / LMG 30748 / EbN1) (Azoarcus sp. (strain EbN1)).